The chain runs to 354 residues: tRNase Z TRZ2, chloroplastic (354 aa).

The disordered stretch occupies residues 1–21 (MQLSSSFPISPPKIFPSTKHH). The transit peptide at 1–68 (MQLSSSFPIS…EEEEEYRKAR (68 aa)) directs the protein to the chloroplast.

Belongs to the RNase Z family. Homodimer. It depends on Zn(2+) as a cofactor. Ca(2+) is required as a cofactor. Mn(2+) serves as cofactor. Requires Mg(2+) as cofactor. As to expression, highly expressed in green and actively dividing tissues.

It localises to the plastid. Its subcellular location is the chloroplast. It carries out the reaction Endonucleolytic cleavage of RNA, removing extra 3' nucleotides from tRNA precursor, generating 3' termini of tRNAs. A 3'-hydroxy group is left at the tRNA terminus and a 5'-phosphoryl group is left at the trailer molecule.. Functionally, zinc phosphodiesterase, which displays tRNA 3'-processing endonuclease activity. Involved in tRNA maturation, by removing a 3'-trailer from precursor tRNA. This Arabidopsis thaliana (Mouse-ear cress) protein is tRNase Z TRZ2, chloroplastic.